Reading from the N-terminus, the 468-residue chain is Proline--tRNA ligase (468 aa).

Belongs to the class-II aminoacyl-tRNA synthetase family. ProS type 3 subfamily. In terms of assembly, homodimer.

It is found in the cytoplasm. It catalyses the reaction tRNA(Pro) + L-proline + ATP = L-prolyl-tRNA(Pro) + AMP + diphosphate. Its function is as follows. Catalyzes the attachment of proline to tRNA(Pro) in a two-step reaction: proline is first activated by ATP to form Pro-AMP and then transferred to the acceptor end of tRNA(Pro). This is Proline--tRNA ligase from Frankia casuarinae (strain DSM 45818 / CECT 9043 / HFP020203 / CcI3).